A 251-amino-acid polypeptide reads, in one-letter code: Triosephosphate isomerase (251 aa).

12–14 (NWK) provides a ligand contact to substrate. The active-site Electrophile is histidine 99. Catalysis depends on glutamate 169, which acts as the Proton acceptor. Residues glycine 175, serine 214, and 235-236 (GG) contribute to the substrate site.

This sequence belongs to the triosephosphate isomerase family. Homodimer.

It is found in the cytoplasm. The catalysed reaction is D-glyceraldehyde 3-phosphate = dihydroxyacetone phosphate. It participates in carbohydrate biosynthesis; gluconeogenesis. It functions in the pathway carbohydrate degradation; glycolysis; D-glyceraldehyde 3-phosphate from glycerone phosphate: step 1/1. Functionally, involved in the gluconeogenesis. Catalyzes stereospecifically the conversion of dihydroxyacetone phosphate (DHAP) to D-glyceraldehyde-3-phosphate (G3P). This chain is Triosephosphate isomerase, found in Bradyrhizobium sp. (strain BTAi1 / ATCC BAA-1182).